Reading from the N-terminus, the 424-residue chain is Enolase (424 aa).

Residue glutamine 163 participates in (2R)-2-phosphoglycerate binding. The active-site Proton donor is the glutamate 205. Mg(2+) is bound by residues aspartate 242, glutamate 285, and aspartate 312. Positions 337, 366, 367, and 388 each coordinate (2R)-2-phosphoglycerate. Lysine 337 acts as the Proton acceptor in catalysis.

It belongs to the enolase family. Requires Mg(2+) as cofactor.

Its subcellular location is the cytoplasm. The protein resides in the secreted. It localises to the cell surface. It catalyses the reaction (2R)-2-phosphoglycerate = phosphoenolpyruvate + H2O. The protein operates within carbohydrate degradation; glycolysis; pyruvate from D-glyceraldehyde 3-phosphate: step 4/5. Functionally, catalyzes the reversible conversion of 2-phosphoglycerate (2-PG) into phosphoenolpyruvate (PEP). It is essential for the degradation of carbohydrates via glycolysis. This chain is Enolase, found in Dinoroseobacter shibae (strain DSM 16493 / NCIMB 14021 / DFL 12).